Here is a 471-residue protein sequence, read N- to C-terminus: MSHVPPHVPFELSGAELRDAIVQYATNPIYHDNLDWLNHDNPYRRQLRPQVLPHLDYDKVPGRENILNYASLAVQRLLTSVYEADLVFFPKSGLKGKEEDFRAFYSPANRALGERIRPALERYAFGFLDDEVETSGTWTAQSLDAYLDSLDTAGGAEQSPVEKAILGSADRERAARMWLVQFAPDFLSEASPMMRNVLGYYGPAQSEWFKVVIDEYGYGVHDTKHSTLFERTLESVGLESDLHRYWQYYLNSSLLLNNYFHYLGKNHELFFRYVGALYYTESSLVDFCRRADHLLREVFGDTVDTTYFTEHIHIDQHHGRMAREKIIKPLVEAHGDGIIPEIVRGIEEYRVLLEIGDFDFSEQIAWMDAQPELKKLHDPVFEGLKQGKVDAPVAHLVEPRGELSNTHCHDGDELCHIVSGTMRFESGLGSSLTLQAGEGVVIKRNRLHGANIESDECVYEIHSVGDYRKCL.

The HO-like stretch occupies residues 177–328 (MWLVQFAPDF…GRMAREKIIK (152 aa)). Positions 189, 215, 225, 281, 311, 315, 318, 407, 409, and 448 each coordinate Fe(2+). The tract at residues 397–459 (VEPRGELSNT…ANIESDECVY (63 aa)) is cupin.

In terms of assembly, homodimer. The cofactor is Fe(2+).

The catalysed reaction is N(omega)-methyl-L-arginine + 2 NADH + 3 O2 + H(+) = N(delta)-hydroxy-N(omega)-methyl-N(omega)-nitroso-L-citrulline + 2 NAD(+) + 3 H2O. The enzyme catalyses N(omega)-methyl-L-arginine + NADH + O2 + H(+) = N(delta)-hydroxy-N(omega)-methyl-L-arginine + NAD(+) + H2O. It carries out the reaction N(delta)-hydroxy-N(omega)-methyl-L-arginine + NADH + O2 = N(delta),N(omega')-dihydroxy-N(omega)-methyl-L-arginine + NAD(+) + H2O. It catalyses the reaction N(delta),N(omega')-dihydroxy-N(omega)-methyl-L-arginine + O2 = N(delta)-hydroxy-N(omega)-methyl-N(omega)-nitroso-L-citrulline + H2O. The catalysed reaction is 2 N(delta)-hydroxy-N(omega)-methyl-N(omega)-nitroso-L-citrulline + AH2 = 2 N(delta)-hydroxy-N(omega)-methyl-L-citrulline + 2 nitric oxide + A. Its pathway is antibiotic biosynthesis. Its function is as follows. Involved in the biosynthesis of the glucosamine-nitrosourea antibiotic streptozotocin (SZN). Catalyzes a complex multi-step reaction: the overall reaction is an oxidative rearrangement of the guanidine group of N(omega)-methyl-L-arginine (L-NMA), generating an N-nitrosourea product. SznF first hydroxylates L-NMA to form N(delta)-hydroxy-N(omega)-methyl-L-arginine (L-HMA), which is further hydroxylated to give N(delta)-hydroxy-N(omega)-hydroxy-N(omega)-methyl-L-arginine (L-DHMA). Subsequently, an oxidative rearrangement converts this intermediate to N(delta)-hydroxy-N(omega)-methyl-N(omega)-nitroso-L-citrulline. This product is unstable, and degrades non-enzymically into nitric oxide and the denitrosated product N(delta)-hydroxy-N(omega)-methyl-L-citrulline. The sequence is that of Nitrosourea synthase from Streptomyces achromogenes subsp. streptozoticus.